The sequence spans 203 residues: Urease accessory protein UreG (203 aa).

GTP is bound at residue 14–21 (GPVGSGKT).

Belongs to the SIMIBI class G3E GTPase family. UreG subfamily. In terms of assembly, homodimer. UreD, UreF and UreG form a complex that acts as a GTP-hydrolysis-dependent molecular chaperone, activating the urease apoprotein by helping to assemble the nickel containing metallocenter of UreC. The UreE protein probably delivers the nickel.

The protein resides in the cytoplasm. Facilitates the functional incorporation of the urease nickel metallocenter. This process requires GTP hydrolysis, probably effectuated by UreG. The polypeptide is Urease accessory protein UreG (Sinorhizobium medicae (strain WSM419) (Ensifer medicae)).